The following is a 229-amino-acid chain: tRNA pseudouridine synthase B (229 aa).

Catalysis depends on D52, which acts as the Nucleophile.

It belongs to the pseudouridine synthase TruB family. Type 1 subfamily.

It catalyses the reaction uridine(55) in tRNA = pseudouridine(55) in tRNA. Functionally, responsible for synthesis of pseudouridine from uracil-55 in the psi GC loop of transfer RNAs. The chain is tRNA pseudouridine synthase B from Flavobacterium johnsoniae (strain ATCC 17061 / DSM 2064 / JCM 8514 / BCRC 14874 / CCUG 350202 / NBRC 14942 / NCIMB 11054 / UW101) (Cytophaga johnsonae).